A 276-amino-acid chain; its full sequence is Protein MGF 360-15R (276 aa).

The protein belongs to the asfivirus MGF 360 family.

Plays a role in virus cell tropism, and may be required for efficient virus replication in macrophages. The sequence is that of Protein MGF 360-15R from African swine fever virus (isolate Warthog/Namibia/Wart80/1980) (ASFV).